Reading from the N-terminus, the 416-residue chain is Casein kinase I isoform epsilon (416 aa).

The region spanning 9 to 277 is the Protein kinase domain; it reads YRLGRKIGSG…YLRQLFRNLF (269 aa). ATP is bound by residues 15-23 and lysine 38; that span reads IGSGSFGDI. Aspartate 128 functions as the Proton acceptor in the catalytic mechanism. Residues 301-318 show a composition bias toward basic and acidic residues; that stretch reads PEDMDRERREHEREERMG. The disordered stretch occupies residues 301 to 416; the sequence is PEDMDRERRE…TSVPFDHLGK (116 aa). Positions 324–338 are enriched in low complexity; the sequence is ATRALPPGPPAGATG. Polar residues-rich tracts occupy residues 350–365 and 400–409; these read STPTSRIQQSGNTSPR and SRISASQTSV.

It belongs to the protein kinase superfamily. CK1 Ser/Thr protein kinase family. Casein kinase I subfamily. In terms of assembly, monomer. Component of the circadian core oscillator, which includes the CRY proteins, CLOCK, or NPAS2, BMAL1 or BMAL2, CSNK1E, and the PER proteins.

Its subcellular location is the cytoplasm. The catalysed reaction is L-seryl-[protein] + ATP = O-phospho-L-seryl-[protein] + ADP + H(+). It carries out the reaction L-threonyl-[protein] + ATP = O-phospho-L-threonyl-[protein] + ADP + H(+). Its function is as follows. Casein kinases are operationally defined by their preferential utilization of acidic proteins such as caseins as substrates. Can phosphorylate a large number of proteins. Participates in Wnt signaling. Phosphorylates DVL1. Central component of the circadian clock. May act as a negative regulator of circadian rhythmicity by phosphorylating PER1 and PER2. Retains PER1 in the cytoplasm. In Gallus gallus (Chicken), this protein is Casein kinase I isoform epsilon (CSNK1E).